Reading from the N-terminus, the 185-residue chain is Protein FAM219A (185 aa).

At Met-1 the chain carries N-acetylmethionine. The disordered stretch occupies residues 1–131 (MMEEIDRFQV…SRYSSSGYSS (131 aa)). Ser-47 carries the phosphoserine modification. Positions 52–61 (KLEKQRELAR) are enriched in basic and acidic residues. Polar residues predominate over residues 66-80 (KNGSMGSPVNQQPKK). Phosphoserine occurs at positions 72 and 102. Residue Thr-113 is modified to Phosphothreonine. A phosphoserine mark is found at Ser-115 and Ser-122. A compositionally biased stretch (low complexity) spans 122–131 (SRYSSSGYSS).

Belongs to the FAM219 family.

The protein is Protein FAM219A (FAM219A) of Homo sapiens (Human).